Here is a 476-residue protein sequence, read N- to C-terminus: Sulfate adenylyltransferase subunit 1 (476 aa).

The 216-residue stretch at 24-239 folds into the tr-type G domain; sequence KSMLRFLTCG…VLENVDIDQK (216 aa). Residues 33-40 are G1; sequence GSVDDGKS. Residue 33-40 participates in GTP binding; that stretch reads GSVDDGKS. The G2 stretch occupies residues 91-95; it reads GITID. Positions 112–115 are G3; it reads DTPG. GTP is bound by residues 112–116 and 167–170; these read DTPGH and NKMD. A G4 region spans residues 167–170; the sequence is NKMD. A G5 region spans residues 205–207; that stretch reads SAL.

This sequence belongs to the TRAFAC class translation factor GTPase superfamily. Classic translation factor GTPase family. CysN/NodQ subfamily. In terms of assembly, heterodimer composed of CysD, the smaller subunit, and CysN.

The catalysed reaction is sulfate + ATP + H(+) = adenosine 5'-phosphosulfate + diphosphate. Its pathway is sulfur metabolism; hydrogen sulfide biosynthesis; sulfite from sulfate: step 1/3. Its function is as follows. With CysD forms the ATP sulfurylase (ATPS) that catalyzes the adenylation of sulfate producing adenosine 5'-phosphosulfate (APS) and diphosphate, the first enzymatic step in sulfur assimilation pathway. APS synthesis involves the formation of a high-energy phosphoric-sulfuric acid anhydride bond driven by GTP hydrolysis by CysN coupled to ATP hydrolysis by CysD. This is Sulfate adenylyltransferase subunit 1 from Vibrio atlanticus (strain LGP32) (Vibrio splendidus (strain Mel32)).